The following is a 239-amino-acid chain: Ribosomal RNA large subunit methyltransferase E (239 aa).

Positions 88, 90, 111, 127, and 151 each coordinate S-adenosyl-L-methionine. K191 functions as the Proton acceptor in the catalytic mechanism.

Belongs to the class I-like SAM-binding methyltransferase superfamily. RNA methyltransferase RlmE family.

It is found in the cytoplasm. The catalysed reaction is uridine(2552) in 23S rRNA + S-adenosyl-L-methionine = 2'-O-methyluridine(2552) in 23S rRNA + S-adenosyl-L-homocysteine + H(+). Specifically methylates the uridine in position 2552 of 23S rRNA at the 2'-O position of the ribose in the fully assembled 50S ribosomal subunit. This Bartonella bacilliformis (strain ATCC 35685 / KC583 / Herrer 020/F12,63) protein is Ribosomal RNA large subunit methyltransferase E.